Reading from the N-terminus, the 1059-residue chain is Disks large-associated protein 2 (1059 aa).

2 disordered regions span residues 31–54 (GEPE…PAEE) and 245–311 (KSHS…SDST). Residues 245 to 261 (KSHSLEGSSKSNINGTK) show a composition bias toward polar residues. Basic and acidic residues predominate over residues 262-271 (SDSRVDDHHQ). A compositionally biased stretch (basic residues) spans 272-285 (SHLSKHSKRSKSKE). Phosphoserine is present on residues Ser-302, Ser-308, Ser-390, and Ser-456. The disordered stretch occupies residues 613–669 (YKKTPPPVPPRTTSKPLISVTAQSSTESTQDAYQDSRAQRMSPWPQDSRGGLYNSMD). Polar residues predominate over residues 632–645 (VTAQSSTESTQDAY). Ser-667, Ser-670, Ser-673, and Ser-720 each carry phosphoserine. The tract at residues 723 to 756 (VQDSEFPDHQPYPRSDVETATDSDTESRGLREYH) is disordered. Thr-743 carries the phosphothreonine modification. At Ser-745 the chain carries Phosphoserine. The segment covering 747-756 (TESRGLREYH) has biased composition (basic and acidic residues). Ser-776, Ser-811, Ser-983, and Ser-1012 each carry phosphoserine. The tract at residues 985–1025 (ERKEERKIPPPIPKKPPKGKFPITREKSLDLPDRQRQEARR) is disordered. Residues 1007-1025 (ITREKSLDLPDRQRQEARR) are compositionally biased toward basic and acidic residues.

This sequence belongs to the SAPAP family. Interacts with DLG4/PSD-95. In terms of tissue distribution, expressed in various brain areas.

Its subcellular location is the cell membrane. It is found in the postsynaptic density. The protein localises to the synapse. In terms of biological role, may play a role in the molecular organization of synapses and neuronal cell signaling. Could be an adapter protein linking ion channel to the subsynaptic cytoskeleton. May induce enrichment of PSD-95/SAP90 at the plasma membrane. This is Disks large-associated protein 2 from Mus musculus (Mouse).